The sequence spans 388 residues: MKKILLLGSGELGKEFVISAQRKGQHIIACDSYAGAPAMQVADECEVFDMLNGEELERIVKKHRPDIIVPEIEAIRTERLYDFEKEGIQVVPSARAVNYTMNRKAIRDLAAKELGLKTAKYYYAKSLEELKEAAEKIGFPCVVKPLMSSSGKGQSLVKSAAELEHAWEYGCNGSRGDIRELIIEEFIKFDSEITLLTVTQKNGPTLFCPPIGHVQKGGDYRESFQPAHIDPAHLKEAEDMAEKVTRALTGAGLWGVEFFLSHENGVYFSELSPRPHDTGMVTLAGTQNLNEFELHLRAVLGLPIPGIKQERIGASAVILSPIASQERPQYRGMEEVTGEEDTYLRIFGKPYTRVNRRMGVVLCYAPNGSDLDALRDKAKRIADKVEVY.

N(1)-(5-phospho-beta-D-ribosyl)glycinamide contacts are provided by residues 11 to 12 and E71; that span reads EL. ATP contacts are provided by residues R103, K144, 149–154, 184–187, and E192; these read SSGKGQ and EEFI. An ATP-grasp domain is found at 108-300; that stretch reads DLAAKELGLK…EFELHLRAVL (193 aa). Mg(2+) is bound by residues E257 and E270. Residues D277, K349, and 356-357 each bind N(1)-(5-phospho-beta-D-ribosyl)glycinamide; that span reads RR.

It belongs to the PurK/PurT family. Homodimer.

It carries out the reaction N(1)-(5-phospho-beta-D-ribosyl)glycinamide + formate + ATP = N(2)-formyl-N(1)-(5-phospho-beta-D-ribosyl)glycinamide + ADP + phosphate + H(+). The protein operates within purine metabolism; IMP biosynthesis via de novo pathway; N(2)-formyl-N(1)-(5-phospho-D-ribosyl)glycinamide from N(1)-(5-phospho-D-ribosyl)glycinamide (formate route): step 1/1. Involved in the de novo purine biosynthesis. Catalyzes the transfer of formate to 5-phospho-ribosyl-glycinamide (GAR), producing 5-phospho-ribosyl-N-formylglycinamide (FGAR). Formate is provided by PurU via hydrolysis of 10-formyl-tetrahydrofolate. This is Formate-dependent phosphoribosylglycinamide formyltransferase from Bacteroides fragilis (strain ATCC 25285 / DSM 2151 / CCUG 4856 / JCM 11019 / LMG 10263 / NCTC 9343 / Onslow / VPI 2553 / EN-2).